The following is a 142-amino-acid chain: Nucleoside diphosphate kinase (142 aa).

Positions 11, 59, 87, 93, 104, and 114 each coordinate ATP. H117 acts as the Pros-phosphohistidine intermediate in catalysis.

It belongs to the NDK family. In terms of assembly, homotetramer. Mg(2+) serves as cofactor.

The protein localises to the cytoplasm. The catalysed reaction is dZDP + ATP = dZTP + ADP. It catalyses the reaction a 2'-deoxyribonucleoside 5'-diphosphate + ATP = a 2'-deoxyribonucleoside 5'-triphosphate + ADP. It carries out the reaction a ribonucleoside 5'-diphosphate + ATP = a ribonucleoside 5'-triphosphate + ADP. It functions in the pathway purine metabolism. In terms of biological role, major role in the synthesis of nucleoside triphosphates other than ATP. The ATP gamma phosphate is transferred to the NDP beta phosphate via a ping-pong mechanism, using a phosphorylated active-site intermediate. (Microbial infection) Catalyzes the phosphorylation of dZDP to dZTP, when the bacterium is infected by a phage that produces the substrate for the synthesis of dZTP (2- amino-2'-deoxyadenosine 5'-triphosphate), which is then used by the phage as a DNA polymerase substrate. The polypeptide is Nucleoside diphosphate kinase (Vibrio cholerae serotype O1 (strain ATCC 39315 / El Tor Inaba N16961)).